A 568-amino-acid polypeptide reads, in one-letter code: Acetate--CoA ligase CCL3 (568 aa).

ATP is bound by residues 204–212, 340–345, D437, 449–452, and K547; these read TSGTTASPK, HTYGLS, and IKDR. An SBD1 region spans residues 272–340; it reads TAKGVYSAIA…MSEKGFKVAH (69 aa). The SBD2 stretch occupies residues 341 to 417; sequence TYGLSETYGP…MRGNAVMKGY (77 aa).

The protein belongs to the ATP-dependent AMP-binding enzyme family. Mostly expressed in glandular trichomes (lupulin glands) after flowering and in old leaves, and, to a lower extent, in stems, young leaves, cones and flowers.

It is found in the cytoplasm. The protein resides in the cytosol. It catalyses the reaction acetate + ATP + CoA = acetyl-CoA + AMP + diphosphate. It carries out the reaction propanoate + ATP + CoA = propanoyl-CoA + AMP + diphosphate. The catalysed reaction is butanoate + ATP + CoA = butanoyl-CoA + AMP + diphosphate. The enzyme catalyses 3-methylbutanoate + ATP + CoA = 3-methylbutanoyl-CoA + AMP + diphosphate. It catalyses the reaction pentanoate + ATP + CoA = pentanoyl-CoA + AMP + diphosphate. It carries out the reaction hexanoate + ATP + CoA = hexanoyl-CoA + AMP + diphosphate. The catalysed reaction is 2-methylpropanoate + ATP + CoA = 2-methylpropanoyl-CoA + AMP + diphosphate. The enzyme catalyses 2-methylbutanoate + ATP + CoA = 2-methylbutanoyl-CoA + AMP + diphosphate. It catalyses the reaction 2-methylpentanoate + ATP + CoA = 2-methylpentanoyl-CoA + AMP + diphosphate. It carries out the reaction 3-methylpentanoate + ATP + CoA = 3-methylpentanoyl-CoA + AMP + diphosphate. The catalysed reaction is 4-methylpentanoate + ATP + CoA = 4-methylpentanoyl-CoA + AMP + diphosphate. It participates in secondary metabolite biosynthesis. Involved in the biosynthesis of prenylated phenolics natural products which contribute to the bitter taste of beer and display broad biological activities. Catalyzes the ligation of CoA on propanoate to produce propanoyl-CoA. Can also use 2-methylpropanoate (isobutyric acid), acetate, butanoate, isovalerate, pentanoate, hexanoate, 2-methylbutanoate, 2-methylpentanoate, 3-methylpentanoate and 4-methylpentanoate as substrates with a lower efficiency. Triggers the formation of very short chain acyl-CoAs from the corresponding fatty acids, including acetic acid, propanoic acid, butyric acid and its isomer. In Humulus lupulus (European hop), this protein is Acetate--CoA ligase CCL3.